The sequence spans 2531 residues: Probable polyketide synthase 26 (2531 aa).

Positions 10–433 (QEDIAIIGFR…GSNCCLVLTE (424 aa)) constitute a Ketosynthase family 3 (KS3) domain. Active-site for beta-ketoacyl synthase activity residues include cysteine 174, histidine 316, and histidine 356. The tract at residues 620–653 (GINPSFIVGHSLGELPMAFCSGMIDFDTVCYLLY) is acyl/malonyl transferase. The active-site For acyl/malonyl transferase activity is serine 630. An N-terminal hotdog fold region spans residues 915–1036 (MDTLGFSNEK…ANYHLSHRDD (122 aa)). The PKS/mFAS DH domain maps to 915-1206 (MDTLGFSNEK…LKSLIPLKDP (292 aa)). Histidine 948 (proton acceptor; for dehydratase activity) is an active-site residue. The interval 1055–1206 (NLTKLSKNQF…LKSLIPLKDP (152 aa)) is C-terminal hotdog fold. Aspartate 1117 (proton donor; for dehydratase activity) is an active-site residue. In terms of domain architecture, Carrier spans 2431–2509 (ASENPVKDLL…DNIKILTDSY (79 aa)). Serine 2468 carries the O-(pantetheine 4'-phosphoryl)serine modification.

Requires pantetheine 4'-phosphate as cofactor.

Probable polyketide synthase. The sequence is that of Probable polyketide synthase 26 (pks26) from Dictyostelium discoideum (Social amoeba).